A 336-amino-acid polypeptide reads, in one-letter code: 3-hydroxyisobutyrate dehydrogenase, mitochondrial (336 aa).

Residues 1–36 constitute a mitochondrion transit peptide; sequence MAASLRLLGAASGLRYWSRRLRPAAGSFAAVCSRSV. NAD(+) is bound at residue 40-69; that stretch reads TPVGFIGLGNMGNPMAKNLMKHGYPLIIYD. N6-acetyllysine; alternate is present on residues Lys60 and Lys76. Residues Lys60 and Lys76 each carry the N6-succinyllysine; alternate modification. The residue at position 95 (Lys95) is an N6-succinyllysine. NAD(+) contacts are provided by residues 103 to 104 and Asn108; that span reads LP. Residue Lys121 is modified to N6-acetyllysine. Position 134 (Thr134) interacts with NAD(+). Position 141 is an N6-succinyllysine (Lys141). Lys145 is subject to N6-acetyllysine. At Lys149 the chain carries N6-acetyllysine; alternate. Lys149 is subject to N6-succinyllysine; alternate. Lys209 is a catalytic residue. Lys238 and Lys242 each carry N6-acetyllysine; alternate. N6-succinyllysine; alternate is present on residues Lys238 and Lys242. Lys284 provides a ligand contact to NAD(+). Lys297 is modified (N6-succinyllysine). The residue at position 321 (Lys321) is an N6-acetyllysine; alternate. Lys321 bears the N6-succinyllysine; alternate mark.

It belongs to the HIBADH-related family. 3-hydroxyisobutyrate dehydrogenase subfamily. In terms of assembly, homodimer.

It is found in the mitochondrion. The enzyme catalyses 3-hydroxy-2-methylpropanoate + NAD(+) = 2-methyl-3-oxopropanoate + NADH + H(+). It functions in the pathway amino-acid degradation; L-valine degradation. The sequence is that of 3-hydroxyisobutyrate dehydrogenase, mitochondrial (HIBADH) from Pongo abelii (Sumatran orangutan).